Consider the following 253-residue polypeptide: MTKAQSIAEIKQLLQAPVTEEQLATFAADSRAGVQKLVVQYHKRAAKLAAQKAAFEERRQTEKALWPDYPLVAGIDEVGRGPLAGPVVTAAVILPHDFDLWQVNDSKQLSFKLKQELYREIMAQAVSVSIGIASPERIDTENIYHATELAMGEAVAGLDKQPDYLLVDAMTVPTDIPQEKLIKGDARSISIASASIVAKVIRDQLMINYDQQYPGYDLANNMGYGTAKHLAGLAELGVTPIHRRSFSPVQNAL.

In terms of domain architecture, RNase H type-2 spans 70-253 (PLVAGIDEVG…RSFSPVQNAL (184 aa)). A divalent metal cation is bound by residues D76, E77, and D168.

It belongs to the RNase HII family. It depends on Mn(2+) as a cofactor. Mg(2+) serves as cofactor.

The protein resides in the cytoplasm. The catalysed reaction is Endonucleolytic cleavage to 5'-phosphomonoester.. Its function is as follows. Endonuclease that specifically degrades the RNA of RNA-DNA hybrids. The chain is Ribonuclease HII from Latilactobacillus sakei subsp. sakei (strain 23K) (Lactobacillus sakei subsp. sakei).